The following is a 131-amino-acid chain: Peptide methionine sulfoxide reductase MsrB (131 aa).

Positions 8–130 constitute a MsrB domain; sequence LDEWRSMLDP…NSVCIDLRPR (123 aa). 4 residues coordinate Zn(2+): Cys-47, Cys-50, Cys-96, and Cys-99. Cys-119 serves as the catalytic Nucleophile.

It belongs to the MsrB Met sulfoxide reductase family. It depends on Zn(2+) as a cofactor.

It catalyses the reaction L-methionyl-[protein] + [thioredoxin]-disulfide + H2O = L-methionyl-(R)-S-oxide-[protein] + [thioredoxin]-dithiol. This is Peptide methionine sulfoxide reductase MsrB from Pseudomonas putida (strain ATCC 700007 / DSM 6899 / JCM 31910 / BCRC 17059 / LMG 24140 / F1).